A 474-amino-acid chain; its full sequence is Vacuolar basic amino acid transporter 2 (474 aa).

Topologically, residues 1–33 (MSISNWITTAYLITSTSFQPLYGSFSDALGRRN) are cytoplasmic. The chain crosses the membrane as a helical span at residues 34–54 (CLFFANGAFTIGCLACGFSKN). Topologically, residues 55 to 62 (IYMLSFMR) are vacuolar. Residues 63–85 (ALTGIGGGGLITLSTIVNSDVIP) form a helical membrane-spanning segment. Over 86 to 97 (SSKRGIFQAFQN) the chain is Cytoplasmic. The chain crosses the membrane as a helical span at residues 98–118 (LLLGFGAICGASFGGTIASSI). The Vacuolar portion of the chain corresponds to 119–121 (GWR). Residues 122–142 (WCFLIQVPISVISSILMNYYV) form a helical membrane-spanning segment. The Cytoplasmic portion of the chain corresponds to 143–167 (PNQKEYNRQNSSIFQNPGKILRDID). A helical transmembrane segment spans residues 168 to 188 (VMGSILIITGLTLQLLYLSLG). Topologically, residues 189 to 196 (CSTSKLSW) are vacuolar. Residues 197-217 (TSPSVLLLLVGSVIILLLFIL) form a helical membrane-spanning segment. Residues 218 to 238 (HERKTSARAIIPMELVNSSYS) are Cytoplasmic-facing. A helical membrane pass occupies residues 239–259 (VVVLSISILVGFASYAYLFTL). Over 260–273 (PLFFQIVLGDSTAK) the chain is Vacuolar. A helical transmembrane segment spans residues 274–294 (AGLRLTIPSLFTPVGSLITGF). The Cytoplasmic segment spans residues 295 to 303 (SMSKYNCLR). The helical transmembrane segment at 304-324 (LLLYIGISLMFLGNFLFLFIE) threads the bilayer. At 325–331 (KTSPNWL) the chain is on the vacuolar side. The helical transmembrane segment at 332–352 (IGLFLIPANLGQGITFPTTLF) threads the bilayer. At 353 to 375 (TFIFMFSKSDQATATSTLYLFRS) the chain is on the cytoplasmic side. Residues 376 to 396 (IGSVWGVAISAGVIQLSFAGL) form a helical membrane-spanning segment. Topologically, residues 397–447 (LRSNLKGLLDENKIKKLIVQLSANSSYIGSLHGEVKNTVIKSFDEATKRAH) are vacuolar. Asn-420 carries N-linked (GlcNAc...) asparagine glycosylation. Residues 448–468 (LMSTLLSSLALILCILKDNLA) traverse the membrane as a helical segment. Residues 469-474 (KPKTRR) lie on the Cytoplasmic side of the membrane.

Belongs to the major facilitator superfamily.

The protein resides in the vacuole membrane. Transporter required for vacuolar uptake of histidine, arginine and lysine and to a lesser extent tyrosine. This Saccharomyces cerevisiae (strain ATCC 204508 / S288c) (Baker's yeast) protein is Vacuolar basic amino acid transporter 2 (VBA2).